The sequence spans 37 residues: Mu-cyrtautoxin-As1a (37 aa).

4 disulfides stabilise this stretch: Cys-1–Cys-15, Cys-8–Cys-19, Cys-14–Cys-35, and Cys-26–Cys-31.

Belongs to the neurotoxin 13 (insecticidal toxin ABC) family. 01 (Aps III) subfamily. Expressed by the venom gland.

It is found in the secreted. Functionally, the recombinant mu-cyrtautoxin-As1a potently and voltage-independently blocks voltage-gated sodium channels (Nav) of insects. It acts by pluging the outer vestibule of the channel. It acts in combination with a weak (30%) voltage-independent block of insect voltage-gated calcium (Cav) channels (low-voltage and high-voltage channels). Tested on DUM neurons, it inhibits sodium currents with an IC(50) of 540 nM (and a Hill coefficient &gt;1, reflecting an incomplete block at higher concentrations). In vivo, it induces flaccid paralysis in adult Australian sheep blowfly Lucilia cuprina. It is both paralytic and lethal, when injected into lepidopteran larvae. It is a slower acting toxin, being lethal at 24 hours, but not paralytic at 1 hour post-injection. The chain is Mu-cyrtautoxin-As1a from Apomastus schlingeri (Trap-door spider).